The primary structure comprises 596 residues: Phosphoprotein (596 aa).

Composition is skewed to polar residues over residues 1 to 11 (MENNAKDNQIM), 38 to 66 (TDSQ…QLES), and 74 to 85 (ENSGSVNENRQL). Disordered stretches follow at residues 1 to 25 (MENN…SSDI), 38 to 196 (TDSQ…ESIS), and 220 to 352 (KNTR…EEST). An N0 binding region spans residues 33 to 41 (EFILSTDSQ). Basic and acidic residues predominate over residues 88 to 97 (SHERATETKN). Polar residues predominate over residues 127-144 (ISRSSPDPNNGTQIQESI). 2 stretches are compositionally biased toward basic and acidic residues: residues 151-168 (EMDK…KDVP) and 233-249 (EDDK…EDTN). A compositionally biased stretch (polar residues) spans 270 to 324 (TLKISTTTGESTRPQSGSQGKRITSWNILNSESGSRTESTSQNSQIPTSGKSNTV). Positions 331-352 (LESRIKTQKTDGKEREDTEEST) are enriched in basic and acidic residues. Residues 374 to 441 (LDLYQDKRVV…KMDESHRRLI (68 aa)) form a multimerization region. The stretch at 416-436 (LNQIQNEILSLKTDLKKMDES) forms a coiled coil. Positions 442-475 (ENQKEQLSLITSLISNLKIMTERGGKKDQPENSG) are l protein binding.

The protein belongs to the respirovirus P protein family. Homotetramer. Interacts (via multimerization domain) with polymerase L; this interaction forms the polymerase complex. Interacts (via N-terminus) with N0; this interaction allows P to chaperon N0 before encapsidation and form the N-P complex. Interacts (via C-terminus) with N-RNA template; this interaction positions the polymerase on the template.

Its function is as follows. Essential cofactor of the RNA polymerase L that plays a central role in the transcription and replication by forming the polymerase complex with RNA polymerase L and recruiting L to the genomic N-RNA template for RNA synthesis. Also plays a central role in the encapsidation of nascent RNA chains by forming the encapsidation complex with the nucleocapsid protein N (N-P complex). Acts as a chaperone for newly synthesized free N protein, so-called N0, allowing encapsidation of nascent RNA chains during replication. The nucleoprotein protein N prevents excessive phosphorylation of P, which leads to down-regulation of viral transcription/ replication. Participates, together with N, in the formation of viral factories (viroplasms), which are large inclusions in the host cytoplasm where replication takes place. Recruits host PI4KB and remodel the host endoplasmic reticulum membrane to form viral replication factories. The sequence is that of Phosphoprotein (P/V/D) from Bovine parainfluenza 3 virus (BPIV-3).